We begin with the raw amino-acid sequence, 863 residues long: Facilitated trehalose transporter Tret1 (863 aa).

Residues 1–208 (MSGRDNRGAG…RIGFQQQKAT (208 aa)) form a disordered region. At 1-398 (MSGRDNRGAG…VYRPTTNPIY (398 aa)) the chain is on the cytoplasmic side. A compositionally biased stretch (basic and acidic residues) spans 28 to 46 (KLKEKLTRAGEELGYHRVE). Positions 47–59 (SNLSASNTGTSLD) are enriched in polar residues. The segment covering 72–85 (AAPQRHPQQQFPHL) has biased composition (low complexity). 2 stretches are compositionally biased toward polar residues: residues 114–129 (PPQQ…RSSG) and 177–187 (KPQQQGNNKAA). A phosphoserine mark is found at Ser254, Ser255, and Ser256. The segment at 286-307 (VLQGSSTDSDEEGDDAEHKRLI) is disordered. Phosphoserine occurs at positions 326 and 328. The disordered stretch occupies residues 332-354 (FLTSRQNFQQQRSISTDSRKSRR). A compositionally biased stretch (polar residues) spans 336–347 (RQNFQQQRSIST). The helical transmembrane segment at 399–419 (IWTQVLAALSVSLGSLVVGFA) threads the bilayer. Residues 420 to 446 (SAYTSPALVSMTNTNLTSFVVTPQAAS) are Extracellular-facing. N-linked (GlcNAc...) asparagine glycosylation occurs at Asn434. Residues 447–467 (WVGGIMPLAGLAGGIAGGPFI) traverse the membrane as a helical segment. Topologically, residues 468-479 (EYLGRRNTILAT) are cytoplasmic. Residues 480 to 500 (AVPFIISWLLIACAVNVVMVL) form a helical membrane-spanning segment. Residues 501 to 503 (CGR) are Extracellular-facing. A helical membrane pass occupies residues 504-524 (FLAGFCVGIASLSLPVYLGET). Topologically, residues 525–530 (VQPEVR) are cytoplasmic. Residues 531–551 (GTLGLLPTAFGNIGILLCFVA) form a helical membrane-spanning segment. Residues 552–558 (GTYMDWS) lie on the Extracellular side of the membrane. A helical transmembrane segment spans residues 559-579 (MLAFLGGTLPVPFLILMFLIP). Over 580–642 (ETPRWYVSRG…ELLKRSNLKP (63 aa)) the chain is Cytoplasmic. The chain crosses the membrane as a helical span at residues 643 to 663 (LSISLGLMFFQQLSGINAVIF). Residues 664–679 (YTVQIFQDAGSTIDGN) are Extracellular-facing. A helical transmembrane segment spans residues 680-700 (VCTIIVGVVNFMATFIATVLI). Over 701–706 (DRAGRK) the chain is Cytoplasmic. A helical transmembrane segment spans residues 707–727 (ILLYVSNVAMILTLFVLGGFF). The Extracellular portion of the chain corresponds to 728–746 (YCKSTGMDTSNVGWLPLSC). A helical membrane pass occupies residues 747 to 767 (FVVYILGFSLGFGPIPWLMMG). Over 768–773 (EILPAK) the chain is Cytoplasmic. A helical transmembrane segment spans residues 774–794 (IRGSAASVATAFNWSCTFVVT). Topologically, residues 795–807 (KSFQDMIDVMGAH) are extracellular. A helical membrane pass occupies residues 808-828 (GAFWMFGAICFVGLFFVIFYV). Over 829-863 (PETQGKTLEDIERKMMGRVRRMSSVANIKPLSFNM) the chain is Cytoplasmic. A phosphoserine mark is found at Ser851 and Ser852.

It belongs to the major facilitator superfamily. Sugar transporter (TC 2.A.1.1) family. Trehalose transporter subfamily.

The protein localises to the cell membrane. In terms of biological role, low-capacity facilitative transporter for trehalose. Does not transport maltose, sucrose or lactose. Mediates the bidirectional transfer of trehalose. Responsible for the transport of trehalose synthesized in the fat body and the incorporation of trehalose into other tissues that require a carbon source, thereby regulating trehalose levels in the hemolymph. In Drosophila mojavensis (Fruit fly), this protein is Facilitated trehalose transporter Tret1.